We begin with the raw amino-acid sequence, 201 residues long: RILP-like protein 2 (201 aa).

Residues 14–108 (SPEMALDKDP…LRDGPQMGVG (95 aa)) enclose the RH1 domain. Residues 67 to 155 (LEMLEALVNQ…AQDELQCYKS (89 aa)) are a coiled coil. In terms of domain architecture, RH2 spans 121–197 (RPRFTLQELR…TVKSLFSFKQ (77 aa)). The segment at 175-201 (TSSPRSNASKEKSTVKSLFSFKQGKNT) is disordered.

This sequence belongs to the RILPL family.

The protein resides in the cytoplasm. Its subcellular location is the cytosol. It localises to the cytoskeleton. The protein localises to the microtubule organizing center. It is found in the centrosome. The protein resides in the cell projection. Its subcellular location is the cilium. Its function is as follows. Involved in cell shape and neuronal morphogenesis, positively regulating the establishment and maintenance of dendritic spines. Plays a role in cellular protein transport. This is RILP-like protein 2 (rilpl2) from Xenopus laevis (African clawed frog).